Consider the following 360-residue polypeptide: Phosphoserine aminotransferase (360 aa).

Arg41 contacts L-glutamate. Pyridoxal 5'-phosphate is bound by residues Trp101, Thr152, Asp172, and Gln195. Lys196 is subject to N6-(pyridoxal phosphate)lysine. Residue Asn237 to Thr238 coordinates pyridoxal 5'-phosphate.

Belongs to the class-V pyridoxal-phosphate-dependent aminotransferase family. SerC subfamily. Homodimer. The cofactor is pyridoxal 5'-phosphate.

The protein localises to the cytoplasm. It catalyses the reaction O-phospho-L-serine + 2-oxoglutarate = 3-phosphooxypyruvate + L-glutamate. It carries out the reaction 4-(phosphooxy)-L-threonine + 2-oxoglutarate = (R)-3-hydroxy-2-oxo-4-phosphooxybutanoate + L-glutamate. Its pathway is amino-acid biosynthesis; L-serine biosynthesis; L-serine from 3-phospho-D-glycerate: step 2/3. It participates in cofactor biosynthesis; pyridoxine 5'-phosphate biosynthesis; pyridoxine 5'-phosphate from D-erythrose 4-phosphate: step 3/5. Catalyzes the reversible conversion of 3-phosphohydroxypyruvate to phosphoserine and of 3-hydroxy-2-oxo-4-phosphonooxybutanoate to phosphohydroxythreonine. The protein is Phosphoserine aminotransferase of Burkholderia ambifaria (strain ATCC BAA-244 / DSM 16087 / CCUG 44356 / LMG 19182 / AMMD) (Burkholderia cepacia (strain AMMD)).